Reading from the N-terminus, the 354-residue chain is S-adenosylmethionine:tRNA ribosyltransferase-isomerase (354 aa).

It belongs to the QueA family. Monomer.

It localises to the cytoplasm. It catalyses the reaction 7-aminomethyl-7-carbaguanosine(34) in tRNA + S-adenosyl-L-methionine = epoxyqueuosine(34) in tRNA + adenine + L-methionine + 2 H(+). It participates in tRNA modification; tRNA-queuosine biosynthesis. In terms of biological role, transfers and isomerizes the ribose moiety from AdoMet to the 7-aminomethyl group of 7-deazaguanine (preQ1-tRNA) to give epoxyqueuosine (oQ-tRNA). This is S-adenosylmethionine:tRNA ribosyltransferase-isomerase from Salmonella typhi.